The chain runs to 298 residues: MKVLWAALVVTLLAGCRADVEPEVEVREPAVWQSGQPWELALSRFWDYLRWVQTLSDQVQEELLSNQVTQELTLLIEDTMKEVKAYKAELEKELGPVAEDTKARLAKELQAAQARLGADMEEVRNRLSQYRSEVQAMLGQSSEELRARLTSHPRKMKRRLQRDIDELQKRMAVYKAGAQEGAERGVSAIRERLGSLIEQGRLQALASQPLQERAQAWGEQMRGRLEKVGSQARDRLEEVREQMEEVRVKVEEQAEAFQARLKSWFEPMMEDMRRQWAELIQKVQVAVGASTSAPSQEP.

A signal peptide spans 1–18; that stretch reads MKVLWAALVVTLLAGCRA. 8 repeat units span residues 74–95, 96–117, 118–139, 140–161, 162–183, 184–204, 205–222, and 223–244. The tract at residues 74-244 is 8 X 22 AA approximate tandem repeats; it reads LLIEDTMKEV…RLEEVREQME (171 aa). Methionine 137 is modified (methionine sulfoxide). Serine 141 carries the phosphoserine modification. An LDL and other lipoprotein receptors binding region spans residues 152–162; that stretch reads HPRKMKRRLQR. 156-159 is a binding site for heparin; that stretch reads MKRR. 218-225 lines the heparin pocket; sequence GEQMRGRL. A specificity for association with VLDL region spans residues 260–272; sequence RLKSWFEPMMEDM.

The protein belongs to the apolipoprotein A1/A4/E family. In terms of assembly, homotetramer. May interact with ABCA1; functionally associated with ABCA1 in the biogenesis of HDLs. May interact with APP/A4 amyloid-beta peptide; the interaction is extremely stable in vitro but its physiological significance is unclear. May interact with MAPT. May interact with MAP2. In the cerebrospinal fluid, interacts with secreted SORL1. Interacts with PMEL; this allows the loading of PMEL luminal fragment on ILVs to induce fibril nucleation. In terms of processing, APOE exists as multiple glycosylated and sialylated glycoforms within cells and in plasma. The extent of glycosylation and sialylation are tissue and context specific. Glycated in plasma VLDL. Post-translationally, phosphorylated by FAM20C in the extracellular medium.

Its subcellular location is the secreted. It localises to the extracellular space. It is found in the extracellular matrix. The protein resides in the extracellular vesicle. The protein localises to the endosome. Its subcellular location is the multivesicular body. Functionally, APOE is an apolipoprotein, a protein associating with lipid particles, that mainly functions in lipoprotein-mediated lipid transport between organs via the plasma and interstitial fluids. APOE is a core component of plasma lipoproteins and is involved in their production, conversion and clearance. Apolipoproteins are amphipathic molecules that interact both with lipids of the lipoprotein particle core and the aqueous environment of the plasma. As such, APOE associates with chylomicrons, chylomicron remnants, very low density lipoproteins (VLDL) and intermediate density lipoproteins (IDL) but shows a preferential binding to high-density lipoproteins (HDL). It also binds a wide range of cellular receptors including the LDL receptor/LDLR and the very low-density lipoprotein receptor/VLDLR that mediate the cellular uptake of the APOE-containing lipoprotein particles. Finally, APOE also has a heparin-binding activity and binds heparan-sulfate proteoglycans on the surface of cells, a property that supports the capture and the receptor-mediated uptake of APOE-containing lipoproteins by cells. This is Apolipoprotein E (APOE) from Cavia porcellus (Guinea pig).